The following is an 87-amino-acid chain: Small ribosomal subunit protein uS17 (87 aa).

Belongs to the universal ribosomal protein uS17 family. In terms of assembly, part of the 30S ribosomal subunit.

One of the primary rRNA binding proteins, it binds specifically to the 5'-end of 16S ribosomal RNA. The polypeptide is Small ribosomal subunit protein uS17 (Macrococcus caseolyticus (strain JCSC5402) (Macrococcoides caseolyticum)).